A 319-amino-acid polypeptide reads, in one-letter code: Malate dehydrogenase (319 aa).

NAD(+)-binding positions include 10-15 (GAGNIG) and aspartate 34. Substrate is bound by residues arginine 83 and arginine 89. Residues asparagine 96 and 119–121 (ITN) contribute to the NAD(+) site. The substrate site is built by asparagine 121 and arginine 152. The Proton acceptor role is filled by histidine 176.

It belongs to the LDH/MDH superfamily. MDH type 3 family.

It catalyses the reaction (S)-malate + NAD(+) = oxaloacetate + NADH + H(+). Its function is as follows. Catalyzes the reversible oxidation of malate to oxaloacetate. This is Malate dehydrogenase from Francisella tularensis subsp. tularensis (strain FSC 198).